The sequence spans 157 residues: Chromophore lyase CpcS/CpeS 1 (157 aa).

The protein belongs to the CpcS/CpeS biliprotein lyase family.

The protein localises to the plastid. The protein resides in the organellar chromatophore. In terms of biological role, covalently attaches a chromophore to Cys residue(s) of phycobiliproteins. This chain is Chromophore lyase CpcS/CpeS 1, found in Paulinella chromatophora.